The sequence spans 497 residues: Probable malate:quinone oxidoreductase (497 aa).

This sequence belongs to the MQO family. FAD serves as cofactor.

The catalysed reaction is (S)-malate + a quinone = a quinol + oxaloacetate. Its pathway is carbohydrate metabolism; tricarboxylic acid cycle; oxaloacetate from (S)-malate (quinone route): step 1/1. The sequence is that of Probable malate:quinone oxidoreductase from Tolumonas auensis (strain DSM 9187 / NBRC 110442 / TA 4).